A 792-amino-acid chain; its full sequence is Terminal nucleotidyltransferase 4A (792 aa).

Residues 55–191 are disordered; sequence GAAGRGSGGL…QFHPGRRKRE (137 aa). Low complexity-rich tracts occupy residues 80–97 and 105–139; these read APAA…PAAE and SPSL…ASLG. Mg(2+)-binding residues include Asp-297 and Asp-299. ATP is bound by residues Gly-360, Lys-385, Ser-403, and Tyr-404. The 59-residue stretch at 428–486 folds into the PAP-associated domain; sequence NLGMLLVEFFELYGRNFNYLKTGIRIKEGGAYIAKEEIMKAMTSGYRPSMLCIEDPLLP. Residues Asn-488 and Arg-492 each contribute to the ATP site. The segment covering 601-619 has biased composition (low complexity); that stretch reads QLLSSGSSASSVSSLSGSD. Disordered regions lie at residues 601–632 and 737–792; these read QLLS…TPSV and MKGS…SLSR. Residues 744-756 are compositionally biased toward gly residues; the sequence is TQGGGYSSVGSGG. Positions 764–781 are enriched in basic residues; that stretch reads RGHHQYNRTGWRRKKHTH.

The protein belongs to the DNA polymerase type-B-like family. As to quaternary structure, component of a nuclear TRAMP-like complex, an ATP-dependent exosome regulatory complex consisting of a helicase (MTREX), an oligadenylate polymerase (TENT4B or TENT4A), and a substrate specific RNA-binding factor (ZCCHC7 or ZCCHC8). Several TRAMP-like complexes exist with specific compositions and are associated with nuclear, or nucleolar RNA exosomes. The cofactor is Mg(2+). It depends on Mn(2+) as a cofactor.

It localises to the cytoplasm. Its subcellular location is the nucleus. It is found in the nucleoplasm. It carries out the reaction RNA(n) + ATP = RNA(n)-3'-adenine ribonucleotide + diphosphate. Its function is as follows. Terminal nucleotidyltransferase that catalyzes preferentially the transfer of ATP and GTP on RNA 3' poly(A) tail creating a heterogeneous 3' poly(A) tail leading to mRNAs stabilization by protecting mRNAs from active deadenylation. Also functions as a catalytic subunit of a TRAMP-like complex which has a poly(A) RNA polymerase activity and is involved in a post-transcriptional quality control mechanism. Polyadenylation with short oligo(A) tails is required for the degradative activity of the exosome on several of its nuclear RNA substrates. Has no terminal uridylyltransferase activity, and does not play a role in replication-dependent histone mRNA degradation via uridylation. This is Terminal nucleotidyltransferase 4A from Homo sapiens (Human).